Here is a 132-residue protein sequence, read N- to C-terminus: Pre-histone-like nucleoprotein (132 aa).

Residues 2–23 (AILISPSNNTGWGLGTHKLFGG) constitute a propeptide that is removed on maturation. Positions 124 to 132 (RRKRRVRSK) match the Nuclear localization signal motif.

Belongs to the adenoviridae histone-like nucleoprotein family. As to quaternary structure, interacts with the core-capsid bridging protein; this interaction bridges the virus core to the capsid. Interacts with host NPM1; this interaction might play a role in placing the pre-histone-like nucleoprotein on the viral DNA or regulating viral gene expression. Interacts with host HMGB1; this interaction inhibits host immune response. In terms of processing, cleaved near the N-terminus by the viral protease during virion maturation to form the mature protein.

It is found in the virion. Its subcellular location is the host nucleus. It localises to the host nucleolus. Its function is as follows. Plays a role in the inhibition of host immune response within the nucleus. Interacts with cellular nucleosomes and immobilizes the host immune danger signal HMGB1 on chromatin. In turn, prevents HMGB1 release out of the cell and thus decreases inflammation. Also plays a role in the wrapping and condensation of the viral DNA. May also promote viral genome import into the nucleus. The polypeptide is Pre-histone-like nucleoprotein (Canine adenovirus serotype 1 (strain CLL) (CAdV-1)).